The sequence spans 548 residues: Adenine deaminase (548 aa).

Belongs to the metallo-dependent hydrolases superfamily. Adenine deaminase family. Requires Mn(2+) as cofactor.

It catalyses the reaction adenine + H2O + H(+) = hypoxanthine + NH4(+). The sequence is that of Adenine deaminase from Borreliella burgdorferi (strain ATCC 35210 / DSM 4680 / CIP 102532 / B31) (Borrelia burgdorferi).